Here is a 31-residue protein sequence, read N- to C-terminus: uncharacterized protein (31 aa).

This is an uncharacterized protein from Saccharomyces cerevisiae (strain ATCC 204508 / S288c) (Baker's yeast).